Here is a 507-residue protein sequence, read N- to C-terminus: AMSH-like ubiquitin thioesterase 1 (507 aa).

The 131-residue stretch at 333–463 (LHIATSMMDT…IFRLTTPGGM (131 aa)) folds into the MPN domain. Residues His411, His413, Asp424, His426, Cys469, His475, and His477 each coordinate Zn(2+). Positions 411 to 424 (HTHPTQSCFMSSID) match the JAMM motif motif.

The protein belongs to the peptidase M67C family. Requires Zn(2+) as cofactor.

The protein localises to the membrane. It localises to the cytoplasm. Its function is as follows. Zinc metalloprotease that cleaves 'Lys-48'- and 'Lys-63'-linked polyubiquitin chains. This Arabidopsis thaliana (Mouse-ear cress) protein is AMSH-like ubiquitin thioesterase 1 (AMSH1).